Consider the following 304-residue polypeptide: Cell surface-binding protein OPG105 (304 aa).

The Alpha-carbonic anhydrase domain occupies 1–235; that stretch reads MPQQLSPINI…NDDTQVYYSG (235 aa). Topologically, residues 1-275 are virion surface; that stretch reads MPQQLSPINI…YQKYIEGNKT (275 aa). The helical transmembrane segment at 276 to 294 threads the bilayer; sequence FAIIAIVFVFILTAILFFM. Residues 295–304 lie on the Intravirion side of the membrane; that stretch reads SQRYSREKQN.

It belongs to the alpha-carbonic anhydrase family. Homodimer; disulfide-linked. In terms of processing, apparently non-glycosylated.

Its subcellular location is the virion membrane. Its function is as follows. Binds to chondroitin sulfate on the cell surface to provide virion attachment to target cell. The protein is Cell surface-binding protein OPG105 (OPG105) of Vaccinia virus (strain Ankara) (VACV).